Reading from the N-terminus, the 399-residue chain is S-adenosylmethionine synthase (399 aa).

ATP is bound at residue histidine 17. Aspartate 19 lines the Mg(2+) pocket. Glutamate 45 serves as a coordination point for K(+). Residues glutamate 58 and glutamine 101 each coordinate L-methionine. The flexible loop stretch occupies residues 101–111; it reads QSPDIAQGVDE. ATP-binding positions include 177-179, 244-245, aspartate 253, 259-260, alanine 276, and lysine 280; these read DAK, RF, and RK. Aspartate 253 contacts L-methionine. Lysine 284 contacts L-methionine.

The protein belongs to the AdoMet synthase family. As to quaternary structure, homotetramer; dimer of dimers. It depends on Mg(2+) as a cofactor. K(+) is required as a cofactor.

It localises to the cytoplasm. It catalyses the reaction L-methionine + ATP + H2O = S-adenosyl-L-methionine + phosphate + diphosphate. Its pathway is amino-acid biosynthesis; S-adenosyl-L-methionine biosynthesis; S-adenosyl-L-methionine from L-methionine: step 1/1. Functionally, catalyzes the formation of S-adenosylmethionine (AdoMet) from methionine and ATP. The overall synthetic reaction is composed of two sequential steps, AdoMet formation and the subsequent tripolyphosphate hydrolysis which occurs prior to release of AdoMet from the enzyme. In Listeria innocua serovar 6a (strain ATCC BAA-680 / CLIP 11262), this protein is S-adenosylmethionine synthase.